We begin with the raw amino-acid sequence, 443 residues long: MDRISSLPDEILEHILSFLSTKEAALTSSLSTRWKNVFVFVPSLHLDYARQHENPREFIDFVDFVNTLFNRKGNSPIKKLALKIHLKDNQSLQNQTHVQSWIHRVLSRGGVTDLDLFITFKGKFQLVPLLIFKSNTLVKLRLGRGFTIKLCHENVYLPMLKTLCLDTVDFDGDHNVFETLLPRCPLLEELVLEDQRWKQWCGSVSSPSLKRLRIRFFHIPIISLDVPGLVYLELSCIFGSKYANVNLDSLVEARLNHWVEEQELRKLRDGSSHLVPADMMDLITGIRKVKVLHLTSDALELFYFSGQELPMFDNLVYLSIASDKKQGWQILPLLIKNSPNLETLVFKGLEHYTTKQCGDACVCSGILGKSSSCLSSSRVKVLEIWSYQGTSKELKQMGHFLMKLQFLELVKIRAVSNLQVPIDIQYLLKLPRASSNCKIQAIF.

The F-box domain occupies 1 to 47 (MDRISSLPDEILEHILSFLSTKEAALTSSLSTRWKNVFVFVPSLHLD). LRR repeat units lie at residues 139 to 167 (KLRLGRGFTIKLCHENVYLPMLKTLCLDT), 169 to 194 (DFDGDHNVFETLLPRCPLLEELVLED), 201 to 236 (CGSVSSPSLKRLRIRFFHIPIISLDVPGLVYLELSC), 271 to 296 (SSHLVPADMMDLITGIRKVKVLHLTS), 323 to 348 (DKKQGWQILPLLIKNSPNLETLVFKG), and 363 to 389 (CSGILGKSSSCLSSSRVKVLEIWSYQG).

In Arabidopsis thaliana (Mouse-ear cress), this protein is F-box/LRR-repeat protein At2g42720.